A 216-amino-acid polypeptide reads, in one-letter code: Putative ripening-related protein 4 (216 aa).

A signal peptide spans 1-25 (MAANVKVLVVLALLQLMSLHAVVHG).

This sequence belongs to the kiwellin family.

It localises to the secreted. The protein is Putative ripening-related protein 4 of Oryza sativa subsp. japonica (Rice).